A 755-amino-acid polypeptide reads, in one-letter code: Cellulose synthase-like protein B3 (755 aa).

2 helical membrane passes run 24–44 (VVDL…ILLM) and 51–71 (WVVA…ITSI). Residues Asp-136 and Asp-461 contribute to the active site. 6 helical membrane-spanning segments follow: residues 534–556 (YLYI…LPAY), 569–589 (VYLG…LWEF), 615–635 (LFSI…VFIV), 674–694 (FLPG…CSVG), 702–722 (GSGL…LPFL), and 733–753 (IPWS…VFSV).

The protein belongs to the glycosyltransferase 2 family. Plant cellulose synthase-like B subfamily. As to expression, expressed in young seedlings, primarily in the vascular tissue.

The protein resides in the golgi apparatus membrane. Thought to be a Golgi-localized beta-glycan synthase that polymerize the backbones of noncellulosic polysaccharides (hemicelluloses) of plant cell wall. This chain is Cellulose synthase-like protein B3 (CSLB3), found in Arabidopsis thaliana (Mouse-ear cress).